A 29-amino-acid chain; its full sequence is Thrombin-like enzyme collinein-2 (29 aa).

As to quaternary structure, monomer. In terms of tissue distribution, expressed by the venom gland.

Its subcellular location is the secreted. Its function is as follows. Thrombin-like snake venom serine protease. The chain is Thrombin-like enzyme collinein-2 from Crotalus durissus collilineatus (Brazilian rattlesnake).